A 513-amino-acid polypeptide reads, in one-letter code: Pantetheinase (513 aa).

Residues 1-22 (MITSPLLAYVAILFFCVLKASS) form the signal peptide. The 268-residue stretch at 40-307 (APLTPVSHEE…GKLLLSQLDS (268 aa)) folds into the CN hydrolase domain. Catalysis depends on Glu-80, which acts as the Proton acceptor. A glycan (N-linked (GlcNAc...) asparagine) is linked at Asn-147. The active-site Proton donor is Lys-179. Cys-212 functions as the Nucleophile in the catalytic mechanism. 2 N-linked (GlcNAc...) asparagine glycosylation sites follow: Asn-315 and Asn-353. The GPI-anchor amidated glycine moiety is linked to residue Gly-487. Positions 488 to 513 (ASADLVAQGLRVMLGVIITIMYSLSW) are cleaved as a propeptide — removed in mature form.

The protein belongs to the carbon-nitrogen hydrolase superfamily. BTD/VNN family. As to quaternary structure, monomer. Detected in kidney (at protein level).

It is found in the cell membrane. It carries out the reaction (R)-pantetheine + H2O = cysteamine + (R)-pantothenate. Its function is as follows. Amidohydrolase that hydrolyzes specifically one of the carboamide linkages in D-pantetheine thus recycling pantothenic acid (vitamin B5) and releasing cysteamine. The protein is Pantetheinase (VNN1) of Sus scrofa (Pig).